The chain runs to 750 residues: Neprilysin (750 aa).

Over residues 1–14 (MGKSESQMDITDIN) the composition is skewed to polar residues. The interval 1–20 (MGKSESQMDITDINTPKPKK) is disordered. Residue Gly-2 is the site of N-myristoyl glycine attachment. Topologically, residues 2 to 28 (GKSESQMDITDINTPKPKKKQRWTPLE) are cytoplasmic. A phosphoserine mark is found at Ser-4 and Ser-6. Positions 16–23 (PKPKKKQR) match the Stop-transfer sequence motif. The helical; Signal-anchor for type II membrane protein transmembrane segment at 29–51 (ISLSVLVLLLTIIAVTMIALYAT) threads the bilayer. The Extracellular segment spans residues 52-750 (YDDGICKSSD…MNPEKKCRVW (699 aa)). One can recognise a Peptidase M13 domain in the interval 56-750 (ICKSSDCIKS…MNPEKKCRVW (695 aa)). 6 disulfides stabilise this stretch: Cys-57/Cys-62, Cys-80/Cys-735, Cys-88/Cys-695, Cys-143/Cys-411, Cys-234/Cys-242, and Cys-621/Cys-747. Arg-103 contributes to the a peptide binding site. Asn-145 carries an N-linked (GlcNAc...) asparagine glycan. N-linked (GlcNAc...) asparagine glycans are attached at residues Asn-285, Asn-311, Asn-325, and Asn-335. Residue His-584 participates in Zn(2+) binding. Glu-585 is an active-site residue. His-588 serves as a coordination point for Zn(2+). The N-linked (GlcNAc...) asparagine glycan is linked to Asn-628. Position 647 (Glu-647) interacts with Zn(2+). Asp-651 functions as the Proton donor in the catalytic mechanism.

Belongs to the peptidase M13 family. Zn(2+) serves as cofactor. Post-translationally, myristoylation is a determinant of membrane targeting. In terms of processing, glycosylation at Asn-628 is necessary both for surface expression and neutral endopeptidase activity.

It is found in the cell membrane. The enzyme catalyses Preferential cleavage of polypeptides between hydrophobic residues, particularly with Phe or Tyr at P1'.. It catalyses the reaction substance P + H2O = substance P(1-9) + L-Leu-L-Met-NH2. The catalysed reaction is substance P + H2O = substance P(1-7) + L-Phe-Gly-L-Leu-L-Met-NH2. It carries out the reaction neurotensin + H2O = neurotensin(1-11) + L-isoleucyl-L-leucine. The enzyme catalyses neurotensin + H2O = neurotensin(1-10) + L-tyrosyl-L-isoleucyl-L-leucine. Its function is as follows. Thermolysin-like specificity, but is almost confined on acting on polypeptides of up to 30 amino acids. Biologically important in the destruction of opioid peptides such as Met- and Leu-enkephalins by cleavage of a Gly-Phe bond. Catalyzes cleavage of bradykinin, substance P and neurotensin peptides. Able to cleave angiotensin-1, angiotensin-2 and angiotensin 1-9. Involved in the degradation of atrial natriuretic factor (ANF) and brain natriuretic factor (BNP(1-32)). Displays UV-inducible elastase activity toward skin preelastic and elastic fibers. The chain is Neprilysin (MME) from Pongo abelii (Sumatran orangutan).